The primary structure comprises 91 residues: Putative membrane protein insertion efficiency factor (91 aa).

Residues 66 to 91 (GGVDPVPSCGCHSDKETTPKEKSDNA) are disordered. Basic and acidic residues predominate over residues 77–91 (HSDKETTPKEKSDNA).

The protein belongs to the UPF0161 family.

The protein resides in the cell inner membrane. In terms of biological role, could be involved in insertion of integral membrane proteins into the membrane. In Hydrogenovibrio crunogenus (strain DSM 25203 / XCL-2) (Thiomicrospira crunogena), this protein is Putative membrane protein insertion efficiency factor.